Here is a 109-residue protein sequence, read N- to C-terminus: Ribonuclease P protein component (109 aa).

This sequence belongs to the RnpA family. As to quaternary structure, consists of a catalytic RNA component (M1 or rnpB) and a protein subunit.

It carries out the reaction Endonucleolytic cleavage of RNA, removing 5'-extranucleotides from tRNA precursor.. In terms of biological role, RNaseP catalyzes the removal of the 5'-leader sequence from pre-tRNA to produce the mature 5'-terminus. It can also cleave other RNA substrates such as 4.5S RNA. The protein component plays an auxiliary but essential role in vivo by binding to the 5'-leader sequence and broadening the substrate specificity of the ribozyme. The protein is Ribonuclease P protein component of Streptococcus agalactiae serotype III (strain NEM316).